We begin with the raw amino-acid sequence, 208 residues long: Glutathione S-transferase 1 (208 aa).

The 80-residue stretch at 1–80 (MDFYYLPGSA…YLVEKYGKTD (80 aa)) folds into the GST N-terminal domain. Glutathione is bound by residues S9, 50–52 (HTI), and 64–66 (ESR). The GST C-terminal domain maps to 86–207 (CPKKRAVINQ…AGCLEFKKYF (122 aa)).

It belongs to the GST superfamily. Theta family. As to quaternary structure, homodimer.

It carries out the reaction RX + glutathione = an S-substituted glutathione + a halide anion + H(+). Its function is as follows. Conjugation of reduced glutathione to a wide number of exogenous and endogenous hydrophobic electrophiles. The protein is Glutathione S-transferase 1 (Gst1) of Musca domestica (House fly).